A 360-amino-acid chain; its full sequence is Plastid lipid-associated protein 3, chloroplastic (360 aa).

The segment covering 1–37 has biased composition (polar residues); sequence MATLFTVTTTSRPFPANPSKTFSPSISLKPNALSFSL. The N-terminal 52 residues, 1 to 52, are a transit peptide targeting the chloroplast; it reads MATLFTVTTTSRPFPANPSKTFSPSISLKPNALSFSLTHHRPPRPLRFSKIR. A disordered region spans residues 1–130; sequence MATLFTVTTT…EWEEREADDG (130 aa). The segment covering 38 to 50 has biased composition (basic residues); that stretch reads THHRPPRPLRFSK. The segment covering 53–68 has biased composition (low complexity); the sequence is SSLPSESDSEPEGGYS. Residues 117–127 are compositionally biased toward acidic residues; it reads TNEDEWEEREA.

It belongs to the PAP/fibrillin family. Ubiquitous expression among various organs, but only at a very low level.

The protein resides in the plastid. It localises to the chloroplast. In Brassica campestris (Field mustard), this protein is Plastid lipid-associated protein 3, chloroplastic (PAP3).